The chain runs to 302 residues: Glutaminase (302 aa).

The substrate site is built by serine 61, asparagine 111, glutamate 155, asparagine 162, tyrosine 186, tyrosine 238, and valine 256.

This sequence belongs to the glutaminase family. As to quaternary structure, homotetramer.

The enzyme catalyses L-glutamine + H2O = L-glutamate + NH4(+). This chain is Glutaminase, found in Pseudomonas syringae pv. tomato (strain ATCC BAA-871 / DC3000).